Consider the following 111-residue polypeptide: Ig kappa chain V-III region PC 7175 (111 aa).

The framework-1 stretch occupies residues 1 to 23 (DIVLTQSPASLAVSLGQRATISC). Cysteine 23 and cysteine 92 are joined by a disulfide. The tract at residues 24 to 38 (RASKSVSTSGYSYMH) is complementarity-determining-1. The tract at residues 39 to 53 (WYQQKPGQPPKLLIY) is framework-2. A complementarity-determining-2 region spans residues 54-60 (LASNLES). Positions 61-92 (GVPARFSGSGSGTDFTLNIHPVEEEDAATYYC) are framework-3. The tract at residues 93 to 101 (QHSRELPLT) is complementarity-determining-3. The framework-4 stretch occupies residues 102–111 (FGAGTKLELK).

This is Ig kappa chain V-III region PC 7175 from Mus musculus (Mouse).